Reading from the N-terminus, the 458-residue chain is Tetratricopeptide repeat protein 23-like (458 aa).

Coiled-coil stretches lie at residues 175–198 (GKQA…LNNG) and 246–278 (TSEL…QAYS).

Its subcellular location is the cytoplasm. The protein localises to the cytoskeleton. It is found in the microtubule organizing center. The protein resides in the centrosome. It localises to the spindle. Its subcellular location is the midbody. This Mus musculus (Mouse) protein is Tetratricopeptide repeat protein 23-like (Ttc23l).